Reading from the N-terminus, the 638-residue chain is Plasma kallikrein (638 aa).

A signal peptide spans 1 to 19 (MILFKQVGYFVSLFATVSC). Apple domains are found at residues 21-104 (CLSQ…LKQC), 111-194 (CHQD…LKSC), 201-284 (CPMD…LFTC), and 292-375 (CHFK…LRLC). Disulfide bonds link Cys21/Cys104, Cys47/Cys77, Cys51/Cys57, Cys111/Cys194, Cys137/Cys166, Cys141/Cys147, Cys201/Cys284, Cys227/Cys256, Cys231/Cys237, Cys292/Cys375, Cys318/Cys347, Cys322/Cys328, Cys340/Cys345, Cys383/Cys503, Cys419/Cys435, Cys517/Cys584, Cys548/Cys563, and Cys574/Cys602. N-linked (GlcNAc...) asparagine glycosylation is present at Asn127. Residue Asn215 is glycosylated (N-linked (GlcNAc...) asparagine). N-linked (GlcNAc...) asparagine glycosylation is present at Asn308. The Peptidase S1 domain occupies 391–626 (IVGGTNSSLG…YIDWILEKIQ (236 aa)). An N-linked (GlcNAc...) asparagine glycan is attached at Asn396. The active-site Charge relay system is His434. The N-linked (GlcNAc...) asparagine glycan is linked to Asn453. Asp483 functions as the Charge relay system in the catalytic mechanism. Asn494 carries an N-linked (GlcNAc...) asparagine glycan. The active-site Charge relay system is the Ser578.

The protein belongs to the peptidase S1 family. Plasma kallikrein subfamily. Forms a heterodimer with SERPINA5. The zymogen is activated by factor XIIa, which cleaves the molecule into a light chain, which contains the active site, and a heavy chain, which associates with HMW kininogen. These chains are linked by one or more disulfide bonds.

It localises to the secreted. The catalysed reaction is Cleaves selectively Arg-|-Xaa and Lys-|-Xaa bonds, including Lys-|-Arg and Arg-|-Ser bonds in (human) kininogen to release bradykinin.. With respect to regulation, inhibited by SERPINA5. In terms of biological role, the enzyme cleaves Lys-Arg and Arg-Ser bonds. It activates, in a reciprocal reaction, factor XII after its binding to a negatively charged surface. It also releases bradykinin from HMW kininogen and may also play a role in the renin-angiotensin system by converting prorenin into renin. The polypeptide is Plasma kallikrein (Klkb1) (Rattus norvegicus (Rat)).